The following is a 247-amino-acid chain: MAGEADGRFKGLLVPILLPEKCYDQLFVQWDLLHVPCLKILLSKGLGLGIVAGSLLVKLPQVFKLLGAKSAEGLSLQSVMLELVALTGTVVYSITNNFPFSSWGEALFLTLQTVAICFLVMHYRGETVKGVAFLACYAMVLLALLSPLTPLAVVTLLQASNVPAVVVGKLLQAATNYRNGHTGQLSAITVFMLFGGSLARIFTSVQETGDPLMAGVFVVSSLCNGLIAAQVLFYWNAKAPHKQKKEQ.

At alanine 2 the chain carries N-acetylalanine. Transmembrane regions (helical) follow at residues 37–57 (CLKI…SLLV), 74–94 (LSLQ…VYSI), 100–120 (FSSW…CFLV), 128–145 (VKGV…LALL), 151–171 (LAVV…GKLL), 185–205 (LSAI…FTSV), and 213–233 (MAGV…QVLF). The PQ-loop 1 domain occupies 39–105 (KILLSKGLGL…NNFPFSSWGE (67 aa)). A PQ-loop 2 domain is found at 159–216 (ASNVPAVVVGKLLQAATNYRNGHTGQLSAITVFMLFGGSLARIFTSVQETGDPLMAGV).

This sequence belongs to the MPDU1 (TC 2.A.43.3) family.

The protein localises to the membrane. Functionally, required for normal utilization of mannose-dolichol phosphate (Dol-P-Man) in the synthesis of N-linked and O-linked oligosaccharides and GPI anchors. The polypeptide is Mannose-P-dolichol utilization defect 1 protein (Mpdu1) (Mus musculus (Mouse)).